The following is a 121-amino-acid chain: Small ribosomal subunit protein uS12c (121 aa).

This sequence belongs to the universal ribosomal protein uS12 family. As to quaternary structure, part of the 30S ribosomal subunit.

It localises to the plastid. The protein resides in the apicoplast. In terms of biological role, with S4 and S5 plays an important role in translational accuracy. Located at the interface of the 30S and 50S subunits. This is Small ribosomal subunit protein uS12c (rps12) from Toxoplasma gondii.